The sequence spans 2360 residues: Nucleoprotein TPR (2360 aa).

Ala2 is modified (N-acetylalanine). Residues 3-13 (AVLQQVLERPE) form a sufficient for interaction with TPR region. Positions 14-117 (LNKLPKSTQN…GIQSQFTRAK (104 aa)) are necessary for interaction with HSF1. Positions 24 to 370 (KLEKFLAEQQ…SATKRKGAIL (347 aa)) form a coiled coil. N6-acetyllysine is present on residues Lys252, Lys312, and Lys345. Phosphoserine is present on Ser379. Residues 423–603 (LDEIVKEVEA…RESRQHQMQL (181 aa)) adopt a coiled-coil conformation. Residues Lys428, Lys457, and Lys477 each carry the N6-acetyllysine modification. Positions 437 to 513 (LKRQREEYER…LMELEEARGN (77 aa)) are necessary for association to the NPC. Phosphoserine occurs at positions 522, 523, and 632. Positions 664-1172 (ETIEAKAALK…IEKLSDKVVT (509 aa)) form a coiled coil. 4 positions are modified to N6-acetyllysine: Lys713, Lys723, Lys748, and Lys755. Positions 915-924 (LASQSTQRTG) are enriched in polar residues. The interval 915–939 (LASQSTQRTGKGQPGDRDDVDDLKS) is disordered. Residues 928-939 (PGDRDDVDDLKS) show a composition bias toward basic and acidic residues. 2 positions are modified to phosphoserine: Ser1180 and Ser1185. Coiled coils occupy residues 1215-1420 (EVAQ…LDAK) and 1472-1629 (VQEM…QRDE). A necessary for interaction with HSF1 region spans residues 1218-1320 (QVESLRYRQR…NAELSEKSGM (103 aa)). Disordered regions lie at residues 1479 to 1520 (KDNL…TAQL) and 1618 to 1673 (EHQE…PTPV). 2 stretches are compositionally biased toward basic and acidic residues: residues 1503-1512 (LSEKETEARS) and 1618-1630 (EHQERHLEQRDEP). The segment covering 1632–1651 (EPTNKAPEQQRQITLKTTPA) has biased composition (polar residues). An N6-acetyllysine modification is found at Lys1689. Position 1691 is a phosphothreonine (Thr1691). Polar residues predominate over residues 1801–1826 (QSSPVERPSTSTAVFGTVSATPSSSL). Residues 1801-2122 (QSSPVERPST…TPGIGGMQQH (322 aa)) form a disordered region. Positions 1811–1866 (STAVFGTVSATPSSSLPKRAREEEEDSTIEAGDQVSDDTVEMPLPKKLKTVTPVGT) are sufficient and essential for mediating its nuclear import. A compositionally biased stretch (acidic residues) spans 1866 to 1880 (TEEEVMAEESTDGEA). A compositionally biased stretch (polar residues) spans 1881-1892 (ETQTYNQDSQDS). Position 1892 is a phosphoserine (Ser1892). A compositionally biased stretch (low complexity) spans 1923 to 1934 (QSDQQTTSSQDG). Acidic residues-rich tracts occupy residues 1945–1986 (DSDD…EDSN) and 1996–2017 (DGYEADDAEGGDGTDPGTETEE). The span at 2023–2061 (ESNQRAADSQNSGEGNTSAAESSFSQEVAREQQPTSASE) shows a compositional bias: polar residues. Phosphoserine occurs at positions 2031, 2034, 2045, 2047, and 2070. Arg2103 and Arg2108 each carry omega-N-methylarginine. Phosphothreonine is present on residues Thr2113 and Thr2134. At Ser2152 the chain carries Phosphoserine. At Arg2160 the chain carries Omega-N-methylarginine. Polar residues predominate over residues 2224–2241 (ESTTSDASEHASQSVPMV). Positions 2224–2360 (ESTTSDASEH…RGGINRGNIN (137 aa)) are disordered. Residues 2242-2254 (TTSTGTLSTTNET) show a composition bias toward low complexity. Acidic residues-rich tracts occupy residues 2256–2269 (AGDDGDEVFVETES) and 2282–2296 (SQQEEEPVQASDESD). Residues 2297–2317 (LPSTSQDPPSSSSVDTSSSQP) are compositionally biased toward low complexity. Asymmetric dimethylarginine occurs at positions 2340, 2342, and 2351. The span at 2349–2360 (GGRGGINRGNIN) shows a compositional bias: gly residues.

The protein belongs to the TPR family. Homodimer. Part of the nuclear pore complex (NPC). Associates with the XPO1/CRM1-mediated nuclear export complex, the Importin alpha/Importin beta receptor and the dynein 1 complex. Interacts (via C-terminal domain) with the KPNB1; the interaction occurs in a RanGTP-dependent manner. Interacts (via C-terminal region and phosphorylated form) with MAPK1/ERK2 (via phosphorylated form); the interaction requires dimerization of MAPK1/ERK2 and increases following EGF stimulation. Interacts with MAPK3/ERK1; the interaction increases following EGF stimulation. Interacts (via coiled coil region) with NUP153; the interaction is direct. Interacts with HSF1; the interaction increases in a stress-responsive manner and stimulates export of stress-induced HSP70 mRNA. Interacts with huntingtin/HTT; the interaction is inhibited by aggregated huntingtin/HTT forms with expanded polyglutamine stretch. Interacts with MAD1L1 (via N-terminal region), MAD2L1, and TTK; the interactions occurs in a microtubule-independent manner. Interacts (via middle region) with DYNLL1. Interacts with DCTN1, dynein, NUP153 and tubulin. Interacts with IFI204 (via C-terminal region). Interacts with IFI203. Interacts with MTA1. Interacts with ZC3HC1; this interaction mediates ZC3HC1 nuclear envelopes (NE)-association but also required for proper positioning of a substantial amount of TPR at the nuclear basket (NB). Phosphorylated. Phosphorylation occurs on serine and threonine residues (comprised in the C-terminal region) by MAPK1/ERK2 and stabilizes the interaction between these two proteins.

The protein resides in the nucleus. It localises to the nucleus membrane. Its subcellular location is the nucleus envelope. It is found in the nuclear pore complex. The protein localises to the cytoplasm. The protein resides in the cytoskeleton. It localises to the spindle. Its subcellular location is the chromosome. It is found in the centromere. The protein localises to the kinetochore. Functionally, component of the nuclear pore complex (NPC), a complex required for the trafficking across the nuclear envelope. Functions as a scaffolding element in the nuclear phase of the NPC essential for normal nucleocytoplasmic transport of proteins and mRNAs, plays a role in the establishment of nuclear-peripheral chromatin compartmentalization in interphase, and in the mitotic spindle checkpoint signaling during mitosis. Involved in the quality control and retention of unspliced mRNAs in the nucleus; in association with NUP153, regulates the nuclear export of unspliced mRNA species bearing constitutive transport element (CTE) in a NXF1- and KHDRBS1-independent manner. Negatively regulates both the association of CTE-containing mRNA with large polyribosomes and translation initiation. Does not play any role in Rev response element (RRE)-mediated export of unspliced mRNAs. Implicated in nuclear export of mRNAs transcribed from heat shock gene promoters; associates both with chromatin in the HSP70 promoter and with mRNAs transcribed from this promoter under stress-induced conditions. Modulates the nucleocytoplasmic transport of activated MAPK1/ERK2 and huntingtin/HTT and may serve as a docking site for the XPO1/CRM1-mediated nuclear export complex. Also plays a role as a structural and functional element of the perinuclear chromatin distribution; involved in the formation and/or maintenance of NPC-associated perinuclear heterochromatin exclusion zones (HEZs). Finally, acts as a spatial regulator of the spindle-assembly checkpoint (SAC) response ensuring a timely and effective recruitment of spindle checkpoint proteins like MAD1L1 and MAD2L1 to unattached kinetochore during the metaphase-anaphase transition before chromosome congression. Its N-terminus is involved in activation of oncogenic kinases. Plays a role in the regulation of nuclear protein export. This Rattus norvegicus (Rat) protein is Nucleoprotein TPR.